Here is a 355-residue protein sequence, read N- to C-terminus: 3'-5' exonuclease (355 aa).

Positions 1-121 (MDKYLIKLPN…PSPEKEKPEK (121 aa)) are disordered. Basic and acidic residues-rich tracts occupy residues 17 to 29 (VSDKKEVVKKETP), 36 to 50 (AKKDTPKQEKEKENT), and 72 to 92 (KNLDTPEVTQEKESVESENPP). 2 positions are modified to phosphoserine: S105 and S113. The 169-residue stretch at 147–315 (VMQWVEKQKE…GQVIYRDLEQ (169 aa)) folds into the 3'-5' exonuclease domain. Residues D164, E166, and D302 each coordinate Mg(2+).

It belongs to the WRNexo family.

It localises to the nucleus. In terms of biological role, has exonuclease activity on both single-stranded and duplex templates bearing overhangs, but not blunt ended duplex DNA, and cleaves in a 3'-5' direction. Essential for the formation of DNA replication focal centers. Has an important role in maintaining genome stability. This Drosophila ananassae (Fruit fly) protein is 3'-5' exonuclease.